Consider the following 612-residue polypeptide: Bifunctional lycopene cyclase/phytoene synthase (612 aa).

The lycopene beta-cyclase stretch occupies residues 1–268 (MGWEYAQVHL…IVFGLIACDN (268 aa)). 7 helical membrane passes run 3-23 (WEYAQVHLKYTIPFGVVLAAV), 31-51 (LDVFKLVFLITVSFFWVVKGL), 112-130 (LFFFVIQTFNTSLLYMILS), 148-168 (IAGQILFASAIIFGLVSVSSG), 171-191 (GMYMGLILIWACPFLLFLWSI), 203-223 (NTALPIALPTLYLWVVDTFAL), and 246-266 (IEEAVFFLLTNTLIVFGLIAC). The phytoene synthase stretch occupies residues 275–612 (TFPEHFPRTK…IRVAWSALNK (338 aa)).

In the N-terminal section; belongs to the lycopene beta-cyclase family. This sequence in the C-terminal section; belongs to the phytoene/squalene synthase family.

It is found in the membrane. The catalysed reaction is all-trans-lycopene = gamma-carotene. It catalyses the reaction gamma-carotene = all-trans-beta-carotene. The enzyme catalyses 2 (2E,6E,10E)-geranylgeranyl diphosphate = 15-cis-phytoene + 2 diphosphate. Its pathway is carotenoid biosynthesis; beta-carotene biosynthesis. The protein operates within carotenoid biosynthesis; phytoene biosynthesis; all-trans-phytoene from geranylgeranyl diphosphate: step 1/1. Its function is as follows. Bifunctional enzyme; part of the car gene cluster that mediates the biosynthesis of neurosporaxanthin, a carboxylic apocarotenoid acting as an essential protective pigments and leading to orange pigmentation. CarAR catalyzes the first step of the pathway by converting geranylgeranyl diphosphate to phytoene, as well as the later cyclization step that transforms the carB product lycopene into gamma-carotene. CarAR also converts part of gamma-carotene into beta-carotene. Neurosporaxanthin is synthesized from geranyl-geranyl pyrophosphate (GGPP) through several enzymatic activities. Phytoene synthase activity performed by the bifunctional enzyme carAR first produces phytoene from geranyl-geranyl pyrophosphate (GGPP). The phytoene dehydrogenase carB then introduces 4 desaturations to lead to lycopene which is substrate of the carotene cyclase activity of carAR that leads to the production of gamma-carotene. CarB then performs a 5th desaturation reaction to yield torulene. Torulene is the substrate of the dioxidase carT that breaks the molecule, removing five carbon atoms to yield beta-apo-4'-carotenal, whereas the aldehyde dehydrogenase carD mediates the last step by converting beta-apo-4'-carotenal into neurosporaxanthin. The polypeptide is Bifunctional lycopene cyclase/phytoene synthase (Fusarium fujikuroi (Bakanae and foot rot disease fungus)).